A 759-amino-acid polypeptide reads, in one-letter code: Glycerol-3-phosphate O-acyltransferase 1 (759 aa).

Residues 1-48 (MPAPKLTEKFASSKSTQKTTNYSSIEAKSVKTSADQAYIYQEPSATKK) lie on the Lumenal side of the membrane. Residues 49-69 (ILYSIATWLLYNIFHCFFREI) traverse the membrane as a helical segment. Topologically, residues 70–434 (RGRGSFKVPQ…AKVNFAKNLG (365 aa)) are cytoplasmic. The short motif at 414–419 (HYNLPD) is the HXXXXD motif element. A helical membrane pass occupies residues 435-449 (LVFFRSIGLCILFSL). A topological domain (lumenal) is located at residue A450. A helical membrane pass occupies residues 451–465 (MPGIIMFSPVFILAK). At 466 to 493 (RISQEKARTALSKSTVKIKANDVIATWK) the chain is on the cytoplasmic side. A helical transmembrane segment spans residues 494 to 514 (ILIGMGFAPLLYIFWSVLITY). Residues 515 to 523 (YLRHKPWNK) are Lumenal-facing. Residues 524-544 (IYVFSGSYISCVIVTYSALIV) form a helical membrane-spanning segment. The Cytoplasmic segment spans residues 545–759 (GDIGMDGFKS…EEEEGKEGDA (215 aa)). Disordered regions lie at residues 613-667 (EEDR…SLVN), 684-705 (RKSESSLASTSVAPSSSSEFEV), and 729-759 (IGENTAREEEEEEEEEEEEEEEEEEGKEGDA). Positions 647-659 (RDNHDAYEHHNQD) are enriched in basic and acidic residues. The segment covering 688-702 (SSLASTSVAPSSSSE) has biased composition (low complexity). Residues 736–759 (EEEEEEEEEEEEEEEEEEGKEGDA) are compositionally biased toward acidic residues.

The protein belongs to the GPAT/DAPAT family.

Its subcellular location is the endoplasmic reticulum membrane. It carries out the reaction sn-glycerol 3-phosphate + an acyl-CoA = a 1-acyl-sn-glycero-3-phosphate + CoA. The enzyme catalyses dihydroxyacetone phosphate + an acyl-CoA = a 1-acylglycerone 3-phosphate + CoA. The catalysed reaction is sn-glycerol 3-phosphate + hexadecanoyl-CoA = 1-hexadecanoyl-sn-glycero-3-phosphate + CoA. It catalyses the reaction (9Z)-hexadecenoyl-CoA + sn-glycerol 3-phosphate = 1-(9Z-hexadecenoyl)-sn-glycero-3-phosphate + CoA. It carries out the reaction sn-glycerol 3-phosphate + octadecanoyl-CoA = 1-octadecanoyl-sn-glycero-3-phosphate + CoA. The enzyme catalyses sn-glycerol 3-phosphate + (9Z)-octadecenoyl-CoA = 1-(9Z-octadecenoyl)-sn-glycero-3-phosphate + CoA. The protein operates within phospholipid metabolism; CDP-diacylglycerol biosynthesis; CDP-diacylglycerol from sn-glycerol 3-phosphate: step 1/3. Its function is as follows. Dual substrate-specific glycerol-3-phosphate/dihydroxyacetone phosphate sn-1 acyltransferase, catalyzing the first and committed reaction in the de novo synthesis of glycerophospholipids and triacylglycerols (TAGs). Prefers Gly-3-P over dihydroxyacetone phosphate and has a marked preference for 16-carbon fatty acyl chains. Transfers a fatty acid from fatty acyl-CoA to the sn-1 position of glycerol-3-phosphate to produce lysophosphatidic acid (LysoPA). These lipids not only are precursors of glycerolipids, but also are dynamic components of signal transduction systems that control cell physiology. SCT1 is the primary supplier of diacylglycerols (DAG), used mainly in TAG synthesis and phosphatidylcholine (PC) synthesis through the CDP-choline pathway. Regulates fatty acid desaturation, that is, the ratio of unsaturated versus saturated fatty acyl chains, by competing with the desaturase OLE1 for the common substrate C16:0-CoA. Sequesters C16:0-CoA into lipids, thereby shielding it from desaturation by OLE1. This chain is Glycerol-3-phosphate O-acyltransferase 1, found in Saccharomyces cerevisiae (strain ATCC 204508 / S288c) (Baker's yeast).